Reading from the N-terminus, the 456-residue chain is Bifunctional protein GlmU (456 aa).

The interval 1 to 229 (MLNSAMSVVI…LSEVEGVNNR (229 aa)) is pyrophosphorylase. Residues 11–14 (LAAG), lysine 25, glutamine 76, 81–82 (GT), 103–105 (YGD), glycine 140, glutamate 154, asparagine 169, and asparagine 227 contribute to the UDP-N-acetyl-alpha-D-glucosamine site. Aspartate 105 provides a ligand contact to Mg(2+). Asparagine 227 lines the Mg(2+) pocket. Residues 230-250 (LQLSRLERVYQSEQAEKLLLA) are linker. An N-acetyltransferase region spans residues 251–456 (GVMLRDPARF…QGWQRPAKKK (206 aa)). UDP-N-acetyl-alpha-D-glucosamine is bound by residues arginine 333 and lysine 351. Residue histidine 363 is the Proton acceptor of the active site. Residues tyrosine 366 and asparagine 377 each contribute to the UDP-N-acetyl-alpha-D-glucosamine site. Acetyl-CoA-binding positions include alanine 380, 386–387 (NY), serine 405, alanine 423, and arginine 440.

This sequence in the N-terminal section; belongs to the N-acetylglucosamine-1-phosphate uridyltransferase family. In the C-terminal section; belongs to the transferase hexapeptide repeat family. As to quaternary structure, homotrimer. Mg(2+) serves as cofactor.

It localises to the cytoplasm. It carries out the reaction alpha-D-glucosamine 1-phosphate + acetyl-CoA = N-acetyl-alpha-D-glucosamine 1-phosphate + CoA + H(+). The enzyme catalyses N-acetyl-alpha-D-glucosamine 1-phosphate + UTP + H(+) = UDP-N-acetyl-alpha-D-glucosamine + diphosphate. The protein operates within nucleotide-sugar biosynthesis; UDP-N-acetyl-alpha-D-glucosamine biosynthesis; N-acetyl-alpha-D-glucosamine 1-phosphate from alpha-D-glucosamine 6-phosphate (route II): step 2/2. It participates in nucleotide-sugar biosynthesis; UDP-N-acetyl-alpha-D-glucosamine biosynthesis; UDP-N-acetyl-alpha-D-glucosamine from N-acetyl-alpha-D-glucosamine 1-phosphate: step 1/1. It functions in the pathway bacterial outer membrane biogenesis; LPS lipid A biosynthesis. Catalyzes the last two sequential reactions in the de novo biosynthetic pathway for UDP-N-acetylglucosamine (UDP-GlcNAc). The C-terminal domain catalyzes the transfer of acetyl group from acetyl coenzyme A to glucosamine-1-phosphate (GlcN-1-P) to produce N-acetylglucosamine-1-phosphate (GlcNAc-1-P), which is converted into UDP-GlcNAc by the transfer of uridine 5-monophosphate (from uridine 5-triphosphate), a reaction catalyzed by the N-terminal domain. In Citrobacter koseri (strain ATCC BAA-895 / CDC 4225-83 / SGSC4696), this protein is Bifunctional protein GlmU.